A 641-amino-acid chain; its full sequence is Fructose-1,6-bisphosphatase class 3 (641 aa).

It belongs to the FBPase class 3 family. It depends on Mn(2+) as a cofactor.

The enzyme catalyses beta-D-fructose 1,6-bisphosphate + H2O = beta-D-fructose 6-phosphate + phosphate. Its pathway is carbohydrate biosynthesis; gluconeogenesis. The sequence is that of Fructose-1,6-bisphosphatase class 3 from Ligilactobacillus salivarius (strain UCC118) (Lactobacillus salivarius).